We begin with the raw amino-acid sequence, 213 residues long: Protein-L-isoaspartate O-methyltransferase (213 aa).

The active site involves S61.

The protein belongs to the methyltransferase superfamily. L-isoaspartyl/D-aspartyl protein methyltransferase family.

Its subcellular location is the cytoplasm. It carries out the reaction [protein]-L-isoaspartate + S-adenosyl-L-methionine = [protein]-L-isoaspartate alpha-methyl ester + S-adenosyl-L-homocysteine. Its function is as follows. Catalyzes the methyl esterification of L-isoaspartyl residues in peptides and proteins that result from spontaneous decomposition of normal L-aspartyl and L-asparaginyl residues. It plays a role in the repair and/or degradation of damaged proteins. The protein is Protein-L-isoaspartate O-methyltransferase of Petrotoga mobilis (strain DSM 10674 / SJ95).